Consider the following 373-residue polypeptide: UDP-N-acetylglucosamine--N-acetylmuramyl-(pentapeptide) pyrophosphoryl-undecaprenol N-acetylglucosamine transferase (373 aa).

UDP-N-acetyl-alpha-D-glucosamine contacts are provided by residues 14–16, asparagine 128, arginine 165, serine 199, and glutamine 295; that span reads TAG.

This sequence belongs to the glycosyltransferase 28 family. MurG subfamily.

The protein resides in the cell membrane. The catalysed reaction is di-trans,octa-cis-undecaprenyl diphospho-N-acetyl-alpha-D-muramoyl-L-alanyl-D-glutamyl-meso-2,6-diaminopimeloyl-D-alanyl-D-alanine + UDP-N-acetyl-alpha-D-glucosamine = di-trans,octa-cis-undecaprenyl diphospho-[N-acetyl-alpha-D-glucosaminyl-(1-&gt;4)]-N-acetyl-alpha-D-muramoyl-L-alanyl-D-glutamyl-meso-2,6-diaminopimeloyl-D-alanyl-D-alanine + UDP + H(+). It participates in cell wall biogenesis; peptidoglycan biosynthesis. Its function is as follows. Cell wall formation. Catalyzes the transfer of a GlcNAc subunit on undecaprenyl-pyrophosphoryl-MurNAc-pentapeptide (lipid intermediate I) to form undecaprenyl-pyrophosphoryl-MurNAc-(pentapeptide)GlcNAc (lipid intermediate II). The polypeptide is UDP-N-acetylglucosamine--N-acetylmuramyl-(pentapeptide) pyrophosphoryl-undecaprenol N-acetylglucosamine transferase (Mycobacterium sp. (strain KMS)).